The primary structure comprises 285 residues: Probable methyltransferase ltbC (285 aa).

Positions 1 to 22 are disordered; sequence MASTGQTNNYKQGYSSQTVETQ.

The protein belongs to the class I-like SAM-binding methyltransferase superfamily. As to quaternary structure, monomer.

Probable methyltransferase; part of the gene cluster that mediates the biosynthesis of luteodienoside A, a glycosylated polyketide consisting of an unusual 1-O-beta-D-glucopyranosyl-myo-inositol (glucinol) ester of 3-hydroxy-2,2,4-trimethylocta-4,6-dienoic acid. The HR-PKS ltbA produces the trimethylated polyketide chain from acetyl-CoA, malonyl-CoA and S-adenosylmethionine (SAM), and the ltbA cAT domain then uses glucinol produced by the glycosyltransferase ltbB as an offloading substrate to release luteodienoside A. Since ltbA and ltbB are sufficient for the biosynthesis of luteodienoside A, the functions of the methyltransferase ltbC and the FAD-binding monooxygenase ltbD within the pathway remain obscur. In Aspergillus luteorubrus, this protein is Probable methyltransferase ltbC.